The primary structure comprises 172 residues: NADH-quinone oxidoreductase subunit B 1 (172 aa).

Residues C42, C43, C107, and C137 each contribute to the [4Fe-4S] cluster site.

The protein belongs to the complex I 20 kDa subunit family. NDH-1 is composed of 14 different subunits. Subunits NuoB, C, D, E, F, and G constitute the peripheral sector of the complex. The cofactor is [4Fe-4S] cluster.

The protein resides in the cell inner membrane. The catalysed reaction is a quinone + NADH + 5 H(+)(in) = a quinol + NAD(+) + 4 H(+)(out). Functionally, NDH-1 shuttles electrons from NADH, via FMN and iron-sulfur (Fe-S) centers, to quinones in the respiratory chain. Couples the redox reaction to proton translocation (for every two electrons transferred, four hydrogen ions are translocated across the cytoplasmic membrane), and thus conserves the redox energy in a proton gradient. In Anaeromyxobacter sp. (strain Fw109-5), this protein is NADH-quinone oxidoreductase subunit B 1.